We begin with the raw amino-acid sequence, 128 residues long: Small ribosomal subunit protein uS9 (128 aa).

The protein belongs to the universal ribosomal protein uS9 family.

In Amoebophilus asiaticus (strain 5a2), this protein is Small ribosomal subunit protein uS9.